Here is a 492-residue protein sequence, read N- to C-terminus: Ferruginol synthase (492 aa).

Residues M1 to F21 traverse the membrane as a helical segment. C436 is a binding site for heme.

Belongs to the cytochrome P450 family. Requires heme as cofactor. In terms of tissue distribution, expressed in leaf glandular trichomes.

Its subcellular location is the membrane. The catalysed reaction is abieta-8,11,13-triene + reduced [NADPH--hemoprotein reductase] + O2 = ferruginol + oxidized [NADPH--hemoprotein reductase] + H2O + H(+). The enzyme catalyses ferruginol + reduced [NADPH--hemoprotein reductase] + O2 = 11-hydroxyferruginol + oxidized [NADPH--hemoprotein reductase] + H2O + H(+). It carries out the reaction miltiradiene + 2 reduced [NADPH--hemoprotein reductase] + 2 O2 = 11-oxomiltiradiene + 2 oxidized [NADPH--hemoprotein reductase] + 3 H2O + 2 H(+). Its pathway is secondary metabolite biosynthesis; terpenoid biosynthesis. In terms of biological role, monooxygenase involved in the biosynthesis of labdane-related diterpenes natural products. Catalyzes the oxidation of abietatriene to produce ferruginol. Catalyzes the oxidation of ferruginol at C-12 to produce 11-hydroxyferruginol. Ferruginol and 11-hydroxyferruginol are intermediates in the biosynthesis of carnosate, a potent antioxidant. May also convert miltiradiene into 11-oxomiltiradiene. This Salvia fruticosa (Greek sage) protein is Ferruginol synthase.